The following is a 400-amino-acid chain: Argininosuccinate synthase (400 aa).

Residues 10–18 (AYSGGVDTS) and A38 each bind ATP. Y89 serves as a coordination point for L-citrulline. ATP is bound at residue G119. Positions 121, 125, and 126 each coordinate L-aspartate. N125 is an L-citrulline binding site. R129, S177, E262, and Y274 together coordinate L-citrulline.

This sequence belongs to the argininosuccinate synthase family. Type 1 subfamily. Homotetramer.

The protein localises to the cytoplasm. It carries out the reaction L-citrulline + L-aspartate + ATP = 2-(N(omega)-L-arginino)succinate + AMP + diphosphate + H(+). It participates in amino-acid biosynthesis; L-arginine biosynthesis; L-arginine from L-ornithine and carbamoyl phosphate: step 2/3. In Trichodesmium erythraeum (strain IMS101), this protein is Argininosuccinate synthase.